The sequence spans 442 residues: Histidinol dehydrogenase (442 aa).

The disordered stretch occupies residues 1-20 (MLNVTDLRGQTPSKSDIRRA). NAD(+)-binding residues include Tyr129, Gln193, and Asn218. Residues Thr241, Gln263, and His266 each contribute to the substrate site. Residues Gln263 and His266 each contribute to the Zn(2+) site. Residues Glu332 and His333 each act as proton acceptor in the active site. 4 residues coordinate substrate: His333, Asp366, Glu420, and His425. Asp366 is a binding site for Zn(2+). Residue His425 coordinates Zn(2+).

The protein belongs to the histidinol dehydrogenase family. Zn(2+) is required as a cofactor.

The catalysed reaction is L-histidinol + 2 NAD(+) + H2O = L-histidine + 2 NADH + 3 H(+). The protein operates within amino-acid biosynthesis; L-histidine biosynthesis; L-histidine from 5-phospho-alpha-D-ribose 1-diphosphate: step 9/9. Catalyzes the sequential NAD-dependent oxidations of L-histidinol to L-histidinaldehyde and then to L-histidine. The protein is Histidinol dehydrogenase of Corynebacterium glutamicum (strain ATCC 13032 / DSM 20300 / JCM 1318 / BCRC 11384 / CCUG 27702 / LMG 3730 / NBRC 12168 / NCIMB 10025 / NRRL B-2784 / 534).